Reading from the N-terminus, the 512-residue chain is Histidine ammonia-lyase (512 aa).

Positions 143–145 form a cross-link, 5-imidazolinone (Ala-Gly); sequence ASG. Serine 144 is subject to 2,3-didehydroalanine (Ser).

It belongs to the PAL/histidase family. Contains an active site 4-methylidene-imidazol-5-one (MIO), which is formed autocatalytically by cyclization and dehydration of residues Ala-Ser-Gly.

The protein resides in the cytoplasm. The enzyme catalyses L-histidine = trans-urocanate + NH4(+). It functions in the pathway amino-acid degradation; L-histidine degradation into L-glutamate; N-formimidoyl-L-glutamate from L-histidine: step 1/3. This chain is Histidine ammonia-lyase, found in Ruegeria pomeroyi (strain ATCC 700808 / DSM 15171 / DSS-3) (Silicibacter pomeroyi).